We begin with the raw amino-acid sequence, 290 residues long: 4-hydroxy-tetrahydrodipicolinate synthase (290 aa).

Thr-44 contributes to the pyruvate binding site. The active-site Proton donor/acceptor is Tyr-132. Lys-160 acts as the Schiff-base intermediate with substrate in catalysis. Position 202 (Ile-202) interacts with pyruvate.

Belongs to the DapA family. As to quaternary structure, homotetramer; dimer of dimers.

The protein localises to the cytoplasm. It catalyses the reaction L-aspartate 4-semialdehyde + pyruvate = (2S,4S)-4-hydroxy-2,3,4,5-tetrahydrodipicolinate + H2O + H(+). It participates in amino-acid biosynthesis; L-lysine biosynthesis via DAP pathway; (S)-tetrahydrodipicolinate from L-aspartate: step 3/4. In terms of biological role, catalyzes the condensation of (S)-aspartate-beta-semialdehyde [(S)-ASA] and pyruvate to 4-hydroxy-tetrahydrodipicolinate (HTPA). In Legionella pneumophila subsp. pneumophila (strain Philadelphia 1 / ATCC 33152 / DSM 7513), this protein is 4-hydroxy-tetrahydrodipicolinate synthase.